Consider the following 542-residue polypeptide: Calcium/calmodulin-dependent protein kinase type II subunit beta (542 aa).

Residues 14-272 (YQLYEDIGKG…AHEALKHPWV (259 aa)) form the Protein kinase domain. Phosphotyrosine is present on tyrosine 17. ATP is bound by residues 20-28 (IGKGAFSVV) and lysine 43. The active-site Proton acceptor is the aspartate 136. The segment at 283 to 292 (HRQETVECLK) is autoinhibitory domain. Position 287 is a phosphothreonine; by autocatalysis (threonine 287). Positions 291–301 (LKKFNARRKLK) are calmodulin-binding. Phosphothreonine; by autocatalysis is present on residues threonine 306 and threonine 307. Residues 349-407 (ADGVKPQTNSTKNSAAATSPKGTLPPAALEPQTTVIHNPVDGIKESSDSTHTTIEDEDT) are disordered. Residues 354–369 (PQTNSTKNSAAATSPK) are compositionally biased toward polar residues. Phosphoserine occurs at positions 367, 394, and 397. Phosphothreonine occurs at positions 400 and 401.

This sequence belongs to the protein kinase superfamily. CAMK Ser/Thr protein kinase family. CaMK subfamily. In terms of assembly, CAMK2 is composed of 4 different chains: alpha (CAMK2A), beta (CAMK2B), gamma (CAMK2G), and delta (CAMK2D). The different isoforms assemble into homo- or heteromultimeric holoenzymes composed of 12 subunits with two hexameric rings stacked one on top of the other. Interacts with SYNGAP1, CAMK2N2 and MPDZ. Interacts with FOXO3. Interacts (when in a kinase inactive state not associated with calmodulin) with ARC; leading to target ARC to inactive synapses. Interacts with CAMK2N1; this interaction requires CAMK2B activation by Ca(2+). Autophosphorylation of Thr-287 following activation by Ca(2+)/calmodulin. Phosphorylation of Thr-287 locks the kinase into an activated state.

The protein resides in the cytoplasm. The protein localises to the cytoskeleton. It localises to the microtubule organizing center. Its subcellular location is the centrosome. It is found in the sarcoplasmic reticulum membrane. The protein resides in the synapse. It carries out the reaction L-seryl-[protein] + ATP = O-phospho-L-seryl-[protein] + ADP + H(+). The enzyme catalyses L-threonyl-[protein] + ATP = O-phospho-L-threonyl-[protein] + ADP + H(+). With respect to regulation, activated by Ca(2+)/calmodulin. Binding of calmodulin results in conformational change that relieves intrasteric autoinhibition and allows autophosphorylation of Thr-287 which turns the kinase in a constitutively active form and confers to the kinase a Ca(2+)-independent activity. Functionally, calcium/calmodulin-dependent protein kinase that functions autonomously after Ca(2+)/calmodulin-binding and autophosphorylation, and is involved in dendritic spine and synapse formation, neuronal plasticity and regulation of sarcoplasmic reticulum Ca(2+) transport in skeletal muscle. In neurons, plays an essential structural role in the reorganization of the actin cytoskeleton during plasticity by binding and bundling actin filaments in a kinase-independent manner. This structural function is required for correct targeting of CaMK2A, which acts downstream of NMDAR to promote dendritic spine and synapse formation and maintain synaptic plasticity which enables long-term potentiation (LTP) and hippocampus-dependent learning. In developing hippocampal neurons, promotes arborization of the dendritic tree and in mature neurons, promotes dendritic remodeling. Also regulates the migration of developing neurons. Participates in the modulation of skeletal muscle function in response to exercise. In slow-twitch muscles, is involved in regulation of sarcoplasmic reticulum (SR) Ca(2+) transport and in fast-twitch muscle participates in the control of Ca(2+) release from the SR through phosphorylation of triadin, a ryanodine receptor-coupling factor, and phospholamban (PLN/PLB), an endogenous inhibitor of SERCA2A/ATP2A2. In response to interferon-gamma (IFN-gamma) stimulation, catalyzes phosphorylation of STAT1, stimulating the JAK-STAT signaling pathway. Phosphorylates reticulophagy regulator RETREG1 at 'Ser-147' under endoplasmic reticulum stress conditions which enhances RETREG1 oligomerization and its membrane scission and reticulophagy activity. This is Calcium/calmodulin-dependent protein kinase type II subunit beta (CAMK2B) from Bos taurus (Bovine).